The primary structure comprises 1004 residues: Glutamate [NMDA] receptor subunit 1 (1004 aa).

The N-terminal stretch at 1–39 (MAGTDSPAAARFVYRCLLFAPAIVVGLLLPLTLPPIAAA) is a signal peptide. At 40-585 (QRHTASDNPS…TLVSFLQPFS (546 aa)) the chain is on the extracellular side. 7 N-linked (GlcNAc...) asparagine glycosylation sites follow: N270, N326, N357, N409, N466, N493, and N513. Residues 542–544 (PLT) and R549 contribute to the glycine site. Residues 586-606 (NTLWILVMVSVHVVALVLYLL) traverse the membrane as a helical segment. Over 607 to 663 (DRFSPFGRFKLSHSDSNEEKALNLSSAVWFAWGVLLNSGIGEGTPRSFSARVLGMVW) the chain is Cytoplasmic. Residues 664 to 684 (AGFAMIIVASYTANLAAFLVL) form a helical membrane-spanning segment. The Extracellular segment spans residues 685 to 843 (ERPKTKLSGI…KTPNTLGLKN (159 aa)). Residue N705 is glycosylated (N-linked (GlcNAc...) asparagine). Glycine contacts are provided by S715 and D759. Residues 844 to 864 (MAGVFILVGVGIAGGVGLIII) form a helical membrane-spanning segment. Topologically, residues 865-1004 (EVIYKKHQVK…YTSDVSHLVV (140 aa)) are cytoplasmic. The tract at residues 980 to 1004 (TRPQQNILPPRYSPGYTSDVSHLVV) is disordered. Over residues 994–1004 (GYTSDVSHLVV) the composition is skewed to polar residues.

It belongs to the glutamate-gated ion channel (TC 1.A.10.1) family. Forms a heteromeric NMDA channel with Nmdar2.

The protein localises to the cell membrane. It is found in the postsynaptic cell membrane. It localises to the postsynaptic density. NMDA receptor subtype of glutamate-gated ion channels with high calcium permeability and voltage-dependent sensitivity to magnesium. Mediated by glycine. This protein plays a key role in synaptic plasticity, synaptogenesis, excitotoxicity, memory acquisition and learning. It mediates neuronal functions in glutamate neurotransmission. Is involved in the cell surface targeting of NMDA receptors. Plays a role in associative learning and in long-term memory consolidation. The sequence is that of Glutamate [NMDA] receptor subunit 1 from Drosophila pseudoobscura pseudoobscura (Fruit fly).